The sequence spans 374 residues: Alanine racemase (374 aa).

Lys40 (proton acceptor; specific for D-alanine) is an active-site residue. Position 40 is an N6-(pyridoxal phosphate)lysine (Lys40). Arg136 contributes to the substrate binding site. Catalysis depends on Tyr264, which acts as the Proton acceptor; specific for L-alanine. Met311 contacts substrate.

The protein belongs to the alanine racemase family. Requires pyridoxal 5'-phosphate as cofactor.

It carries out the reaction L-alanine = D-alanine. Its pathway is amino-acid biosynthesis; D-alanine biosynthesis; D-alanine from L-alanine: step 1/1. In terms of biological role, catalyzes the interconversion of L-alanine and D-alanine. May also act on other amino acids. The sequence is that of Alanine racemase (alr) from Pediococcus pentosaceus (strain ATCC 25745 / CCUG 21536 / LMG 10740 / 183-1w).